Here is a 253-residue protein sequence, read N- to C-terminus: 5-oxoprolinase subunit A (253 aa).

The protein belongs to the LamB/PxpA family. As to quaternary structure, forms a complex composed of PxpA, PxpB and PxpC.

It catalyses the reaction 5-oxo-L-proline + ATP + 2 H2O = L-glutamate + ADP + phosphate + H(+). Functionally, catalyzes the cleavage of 5-oxoproline to form L-glutamate coupled to the hydrolysis of ATP to ADP and inorganic phosphate. The sequence is that of 5-oxoprolinase subunit A from Bacillus cereus (strain AH187).